We begin with the raw amino-acid sequence, 210 residues long: Probable GTP-binding protein EngB (210 aa).

In terms of domain architecture, EngB-type G spans 25–199; sequence TGIEVAFAGR…RQKLDTWFSE (175 aa). Residues 33-40, 60-64, 78-81, 145-148, and 178-180 contribute to the GTP site; these read GRSNAGKS, GRTQL, DLPG, TKAD, and FSS. Residues serine 40 and threonine 62 each coordinate Mg(2+).

This sequence belongs to the TRAFAC class TrmE-Era-EngA-EngB-Septin-like GTPase superfamily. EngB GTPase family. It depends on Mg(2+) as a cofactor.

Its function is as follows. Necessary for normal cell division and for the maintenance of normal septation. The sequence is that of Probable GTP-binding protein EngB from Shigella boydii serotype 4 (strain Sb227).